A 198-amino-acid polypeptide reads, in one-letter code: Dephospho-CoA kinase (198 aa).

The region spanning 4 to 198 (FLGLTGGIAS…LSDLLQEIGR (195 aa)) is the DPCK domain. 12 to 17 (ASGKST) is an ATP binding site.

It belongs to the CoaE family.

Its subcellular location is the cytoplasm. It carries out the reaction 3'-dephospho-CoA + ATP = ADP + CoA + H(+). Its pathway is cofactor biosynthesis; coenzyme A biosynthesis; CoA from (R)-pantothenate: step 5/5. Its function is as follows. Catalyzes the phosphorylation of the 3'-hydroxyl group of dephosphocoenzyme A to form coenzyme A. This chain is Dephospho-CoA kinase, found in Lactobacillus johnsonii (strain CNCM I-12250 / La1 / NCC 533).